A 61-amino-acid chain; its full sequence is Probable pancreatic secretory proteinase inhibitor (61 aa).

The Kazal-like domain occupies 6–61; that stretch reads LYRKPSCGEMSAMHACPMNFAPVCGTDGNTYPNECSLCFQRQNTKTDILITKDDRC. 3 cysteine pairs are disulfide-bonded: Cys12/Cys43, Cys21/Cys40, and Cys29/Cys61.

The protein localises to the secreted. The protein is Probable pancreatic secretory proteinase inhibitor of Anguilla anguilla (European freshwater eel).